Reading from the N-terminus, the 1328-residue chain is Mitogen-activated protein kinase kinase kinase 19 (1328 aa).

Residues 1–19 (MSSMPKPERHAESLLDICH) are compositionally biased toward basic and acidic residues. Disordered regions lie at residues 1–28 (MSSM…PTDL), 44–74 (RSEE…QDWQ), 344–380 (VREE…AKNY), and 524–561 (QEND…GPIK). Positions 344–361 (VREEDIDCHGSKTRKPEE) are enriched in basic and acidic residues. The segment covering 364–377 (SQYLSSRKNESSVA) has biased composition (polar residues). Basic and acidic residues predominate over residues 524–542 (QENDKHKMNSHRSKLDSKT). The Protein kinase domain maps to 1061 to 1324 (WTKGEILGKG…ALQLLKHSFL (264 aa)). Residues 1067 to 1075 (LGKGAYGTV) and Lys1089 contribute to the ATP site. Asp1186 serves as the catalytic Proton acceptor.

It belongs to the protein kinase superfamily. STE Ser/Thr protein kinase family. STE20 subfamily.

It catalyses the reaction L-seryl-[protein] + ATP = O-phospho-L-seryl-[protein] + ADP + H(+). It carries out the reaction L-threonyl-[protein] + ATP = O-phospho-L-threonyl-[protein] + ADP + H(+). The polypeptide is Mitogen-activated protein kinase kinase kinase 19 (MAP3K19) (Homo sapiens (Human)).